We begin with the raw amino-acid sequence, 315 residues long: Cysteine proteinase 2 (315 aa).

A signal peptide spans 1 to 13 (MFAFICLLAIASA). The propeptide at 14-93 (IDFNTWASKN…NGQVKYLNIQ (80 aa)) is activation peptide. 2 cysteine pairs are disulfide-bonded: C115–C161 and C152–C193. Residue C118 is part of the active site. Residues H259 and N279 contribute to the active site.

This sequence belongs to the peptidase C1 family. As to quaternary structure, interacts with cysteine protease inhibitor ICP1. Interacts with cysteine protease inhibitor ICP2.

It is found in the cell membrane. The protein localises to the cytoplasmic vesicle. The protein resides in the phagosome. It localises to the secreted. The enzyme catalyses Hydrolysis of proteins, including basement membrane collagen and azocasein. Preferential cleavage: Arg-Arg-|-Xaa in small molecule substrates including Z-Arg-Arg-|-NHMec.. Its activity is regulated as follows. Inhibited by cysteine protease inhibitors ICP1 and ICP2. Inhibited by leupeptin and such inhibitors of cysteine proteinases as L-transepoxysuccinyl-L-leucylamido-(4-guanidino)butane, peptidyldiazomethanes, iodoacetic acid and chicken cystatin. Its function is as follows. Cysteine protease which degrades matrix proteins such as collagen, laminin and fibronectin and thus is involved in the destruction of human tissue. Can abolish adhesion. May play an important role in pathogenicity. The sequence is that of Cysteine proteinase 2 from Entamoeba histolytica (strain ATCC 30459 / HM-1:IMSS / ABRM).